A 504-amino-acid polypeptide reads, in one-letter code: L-carnitine/gamma-butyrobetaine antiporter (504 aa).

The next 12 membrane-spanning stretches (helical) occupy residues 10-30 (IEPK…WLTV), 51-71 (WGWA…WLVF), 92-112 (IFMM…SIEI), 143-163 (GPLP…FFFV), 195-215 (FYLV…TPLV), 231-251 (LDAI…ACGL), 263-283 (SYLS…SFIM), 316-336 (WTVF…IFLA), 347-367 (LCFG…TVLG), 398-418 (WAAL…CFIA), 446-466 (LLVR…LLAL), and 475-495 (AIIA…LSFI).

The protein belongs to the BCCT transporter (TC 2.A.15) family. CaiT subfamily. In terms of assembly, homotrimer.

It is found in the cell inner membrane. The catalysed reaction is 4-(trimethylamino)butanoate(in) + (R)-carnitine(out) = 4-(trimethylamino)butanoate(out) + (R)-carnitine(in). It functions in the pathway amine and polyamine metabolism; carnitine metabolism. In terms of biological role, catalyzes the exchange of L-carnitine for gamma-butyrobetaine. This is L-carnitine/gamma-butyrobetaine antiporter from Escherichia coli O157:H7.